A 144-amino-acid chain; its full sequence is Large ribosomal subunit protein uL15 (144 aa).

Residues 1–52 (MRLNTLSPAEGAKHAPKRVGRGIGSGLGKTAGRGHKGQNSRSGGGVRRGFEG) are disordered. The span at 21–31 (RGIGSGLGKTA) shows a compositional bias: gly residues.

Belongs to the universal ribosomal protein uL15 family. Part of the 50S ribosomal subunit.

In terms of biological role, binds to the 23S rRNA. The sequence is that of Large ribosomal subunit protein uL15 from Yersinia enterocolitica serotype O:8 / biotype 1B (strain NCTC 13174 / 8081).